The following is a 253-amino-acid chain: Electron transfer flavoprotein subunit beta, mitochondrial (253 aa).

Belongs to the ETF beta-subunit/FixA family. Heterodimer of an alpha and a beta subunit. The cofactor is FAD. Requires AMP as cofactor.

It is found in the mitochondrion matrix. Functionally, the electron transfer flavoprotein serves as a specific electron acceptor for several dehydrogenases, including five acyl-CoA dehydrogenases, glutaryl-CoA and sarcosine dehydrogenase. It transfers the electrons to the main mitochondrial respiratory chain via ETF-ubiquinone oxidoreductase (ETF dehydrogenase). The protein is Electron transfer flavoprotein subunit beta, mitochondrial (ETFB) of Oryza sativa subsp. japonica (Rice).